Here is a 362-residue protein sequence, read N- to C-terminus: Peptide chain release factor 1 (362 aa).

N5-methylglutamine is present on Gln-237.

This sequence belongs to the prokaryotic/mitochondrial release factor family. Methylated by PrmC. Methylation increases the termination efficiency of RF1.

It localises to the cytoplasm. In terms of biological role, peptide chain release factor 1 directs the termination of translation in response to the peptide chain termination codons UAG and UAA. The protein is Peptide chain release factor 1 (prfA) of Aquifex aeolicus (strain VF5).